The chain runs to 486 residues: Glutamate--tRNA ligase 2 (486 aa).

The short motif at 12-22 is the 'HIGH' region element; the sequence is PSPTGELHIGN. The short motif at 252–256 is the 'KMSKS' region element; it reads KLSKR. Lys255 is an ATP binding site.

It belongs to the class-I aminoacyl-tRNA synthetase family. Glutamate--tRNA ligase type 1 subfamily. In terms of assembly, monomer.

The protein localises to the cytoplasm. The catalysed reaction is tRNA(Glu) + L-glutamate + ATP = L-glutamyl-tRNA(Glu) + AMP + diphosphate. In terms of biological role, catalyzes the attachment of glutamate to tRNA(Glu) in a two-step reaction: glutamate is first activated by ATP to form Glu-AMP and then transferred to the acceptor end of tRNA(Glu). The sequence is that of Glutamate--tRNA ligase 2 from Syntrophus aciditrophicus (strain SB).